A 95-amino-acid chain; its full sequence is uncharacterized protein (95 aa).

The tract at residues 1–64 is disordered; sequence MEIDDIFASK…PKGASGRKRT (64 aa). A compositionally biased stretch (basic and acidic residues) spans 18–28; it reads KSNDSKSEAKA. Polar residues predominate over residues 35–49; sequence TKSTPSRPKPTNNQD.

This is an uncharacterized protein from Schizosaccharomyces pombe (strain 972 / ATCC 24843) (Fission yeast).